A 956-amino-acid chain; its full sequence is Endogenous retrovirus group K member 8 Pol protein (956 aa).

The Reverse transcriptase domain maps to 57-245; that stretch reads LEKGHIEPSF…TPFHYLGMQI (189 aa). The LPQG motif lies at 161-164; sequence LPQG. The short motif at 195–198 is the YXDD element; that stretch reads YIDD. In terms of domain architecture, RNase H type-1 spans 460–590; sequence LENALTVFTD…ADLLVSSALI (131 aa). Residues Asp469, Glu497, Asp517, and Asp582 each coordinate Mg(2+). The Integrase-type zinc finger occupies 587–628; that stretch reads SALIKAQELHALTHVNAAGLKNKFDVTWKQAKDIVQHCTQCQ. Residues His596, His600, Cys624, and Cys627 each contribute to the Zn(2+) site. The region spanning 642 to 803 is the Integrase catalytic domain; that stretch reads RGLCPNALWQ…TSAEQHLTGK (162 aa). The integrase-type DNA-binding region spans 811–859; sequence KLIWWKDNKNKTWEIGKVITWGRGFACVSPGENQLPVWIPTRHLKFYNE. Positions 864–890 are disordered; the sequence is AKKSTSAETETPQSSTVDSQDEQNGDV. Over residues 869–881 the composition is skewed to polar residues; sequence SAETETPQSSTVD.

The protein belongs to the beta type-B retroviral polymerase family. HERV class-II K(HML-2) pol subfamily.

The catalysed reaction is DNA(n) + a 2'-deoxyribonucleoside 5'-triphosphate = DNA(n+1) + diphosphate. It catalyses the reaction Endonucleolytic cleavage to 5'-phosphomonoester.. Its function is as follows. Early post-infection, the reverse transcriptase converts the viral RNA genome into double-stranded viral DNA. The RNase H domain of the reverse transcriptase performs two functions. It degrades the RNA template and specifically removes the RNA primer from the RNA/DNA hybrid. Following nuclear import, the integrase catalyzes the insertion of the linear, double-stranded viral DNA into the host cell chromosome. Endogenous Pol proteins may have kept, lost or modified their original function during evolution. This is Endogenous retrovirus group K member 8 Pol protein (ERVK-8) from Homo sapiens (Human).